Consider the following 147-residue polypeptide: Ubiquitin-conjugating enzyme E2 5A (147 aa).

Residues 1–15 (MASKRIQKELKDLQK) are compositionally biased toward basic and acidic residues. A disordered region spans residues 1–24 (MASKRIQKELKDLQKDPPTSCSAG). In terms of domain architecture, UBC core spans 1–147 (MASKRIQKEL…ARTWTQRYAM (147 aa)). Residue C85 is the Glycyl thioester intermediate of the active site.

It belongs to the ubiquitin-conjugating enzyme family.

It catalyses the reaction S-ubiquitinyl-[E1 ubiquitin-activating enzyme]-L-cysteine + [E2 ubiquitin-conjugating enzyme]-L-cysteine = [E1 ubiquitin-activating enzyme]-L-cysteine + S-ubiquitinyl-[E2 ubiquitin-conjugating enzyme]-L-cysteine.. Its pathway is protein modification; protein ubiquitination. Functionally, E2 conjugating enzyme that associates with the E3 ubiquitin-protein ligase EL5 to mediate ubiquitination of target proteins. The protein is Ubiquitin-conjugating enzyme E2 5A (UBC5A) of Oryza sativa subsp. japonica (Rice).